Here is a 2267-residue protein sequence, read N- to C-terminus: Acetyl-CoA carboxylase 1 (2267 aa).

Residues 38–544 (PIHSVLVANN…HTGWLDSRIA (507 aa)) enclose the Biotin carboxylation domain. Residues 190–384 (PESCNSIPEE…AAQVVVGMGV (195 aa)) enclose the ATP-grasp domain. 216–273 (CQVVGYPAMIKASWGGGGKGIRKVHNDDEVRALFKQVQGEVPGSPIFIMKVASQSRHL) is a binding site for ATP. Positions 339, 353, and 355 each coordinate Mg(2+). Glutamate 339, glutamate 353, and asparagine 355 together coordinate Mn(2+). Arginine 357 is an active-site residue. A Biotinyl-binding domain is found at 671–745 (LQKEHDPSKL…QAADLIARLD (75 aa)). The residue at position 712 (lysine 712) is an N6-biotinyllysine. One can recognise a CoA carboxyltransferase N-terminal domain in the interval 1502-1843 (PYKPLDAIDL…YVGGPLPIMK (342 aa)). The tract at residues 1502–2163 (PYKPLDAIDL…EDALAKEIRE (662 aa)) is carboxyltransferase. Positions 1752, 2053, and 2055 each coordinate CoA. One can recognise a CoA carboxyltransferase C-terminal domain in the interval 1847–2163 (PPDRPVTYFP…EDALAKEIRE (317 aa)).

As to quaternary structure, homodimer. Requires Mg(2+) as cofactor. It depends on Mn(2+) as a cofactor. Biotin is required as a cofactor.

Its subcellular location is the cytoplasm. It localises to the cytosol. The enzyme catalyses hydrogencarbonate + acetyl-CoA + ATP = malonyl-CoA + ADP + phosphate + H(+). The catalysed reaction is N(6)-biotinyl-L-lysyl-[protein] + hydrogencarbonate + ATP = N(6)-carboxybiotinyl-L-lysyl-[protein] + ADP + phosphate + H(+). It participates in lipid metabolism; malonyl-CoA biosynthesis; malonyl-CoA from acetyl-CoA: step 1/1. Functionally, multifunctional enzyme that catalyzes the carboxylation of acetyl-CoA, forming malonyl-CoA, which is used in the plastid for fatty acid synthesis and in the cytosol in various biosynthetic pathways including fatty acid elongation. The polypeptide is Acetyl-CoA carboxylase 1 (ACC1) (Oryza sativa subsp. japonica (Rice)).